A 256-amino-acid polypeptide reads, in one-letter code: Undecaprenyl-diphosphatase (256 aa).

7 helical membrane-spanning segments follow: residues 39–59, 77–97, 101–121, 135–155, 176–196, 206–226, and 233–253; these read PTDA…AVLV, RTVI…YMLF, FTGG…TGLM, ISTK…LPGV, LMVS…LDCL, LPGA…MDVL, and VSFS…TALP.

The protein belongs to the UppP family.

Its subcellular location is the cell membrane. It carries out the reaction di-trans,octa-cis-undecaprenyl diphosphate + H2O = di-trans,octa-cis-undecaprenyl phosphate + phosphate + H(+). Its function is as follows. Catalyzes the dephosphorylation of undecaprenyl diphosphate (UPP). This Methanothrix thermoacetophila (strain DSM 6194 / JCM 14653 / NBRC 101360 / PT) (Methanosaeta thermophila) protein is Undecaprenyl-diphosphatase.